A 240-amino-acid chain; its full sequence is Triosephosphate isomerase (240 aa).

Position 8-10 (8-10 (NWK)) interacts with substrate. His93 (electrophile) is an active-site residue. Glu160 serves as the catalytic Proton acceptor. Gly166 lines the substrate pocket.

This sequence belongs to the triosephosphate isomerase family. Homodimer.

Its subcellular location is the cytoplasm. It catalyses the reaction D-glyceraldehyde 3-phosphate = dihydroxyacetone phosphate. The protein operates within carbohydrate biosynthesis; gluconeogenesis. It functions in the pathway carbohydrate degradation; glycolysis; D-glyceraldehyde 3-phosphate from glycerone phosphate: step 1/1. In terms of biological role, involved in the gluconeogenesis. Catalyzes stereospecifically the conversion of dihydroxyacetone phosphate (DHAP) to D-glyceraldehyde-3-phosphate (G3P). This chain is Triosephosphate isomerase, found in Ehrlichia chaffeensis (strain ATCC CRL-10679 / Arkansas).